The sequence spans 217 residues: Guanylate kinase (217 aa).

A Guanylate kinase-like domain is found at 10 to 190 (GLLIILSSPS…TEEALKTIIT (181 aa)). 17 to 24 (SPSGAGKS) contacts ATP.

This sequence belongs to the guanylate kinase family.

The protein localises to the cytoplasm. The enzyme catalyses GMP + ATP = GDP + ADP. In terms of biological role, essential for recycling GMP and indirectly, cGMP. In Ruegeria sp. (strain TM1040) (Silicibacter sp.), this protein is Guanylate kinase.